Here is a 300-residue protein sequence, read N- to C-terminus: B1 kinase (300 aa).

Residues 16-282 (WVVGPLIGKG…ITMVNSLTYF (267 aa)) form the Protein kinase domain. ATP is bound by residues 22-30 (IGKGGFGSI) and Lys-45. The active-site Proton acceptor is the Asp-147.

The protein belongs to the protein kinase superfamily. Ser/Thr protein kinase family. Poxviruses subfamily. Interacts with host JIP1; this interaction increases the amount of MAPK bound to JIP1 and subsequently increases the activity of transcription factors, such as JUN, that respond to these complexes. Interacts with protein OPG198; this interaction inhibits the repressive activity of OPG198 pseudokinase on viral replication factory formation. Mg(2+) serves as cofactor. In terms of processing, autophosphorylated.

The protein localises to the virion. It localises to the host cytoplasm. It catalyses the reaction L-seryl-[protein] + ATP = O-phospho-L-seryl-[protein] + ADP + H(+). The catalysed reaction is L-threonyl-[protein] + ATP = O-phospho-L-threonyl-[protein] + ADP + H(+). In terms of biological role, essential serine/threonine-protein kinase that plays different role in the viral life cycle. Phosphorylates the host small ribosomal protein RACK1 thereby customizing the ribosomes to a state optimal for viral mRNAs (which contain poly-A leaders) but not for host mRNAs. Facilitates viral DNA replication by inhibiting host BANF1, a cellular host defense responsive to foreign DNA. Phosphorylates host BANF1 on serine and threonine residues; this leads to BANF1 relocalization to the cytoplasm, loss of dimerization and impaired DNA binding activity. Indeed, BANF1 activity depends on its DNA-binding property which is blocked by VPK1-mediated phosphorylation. Required for viral intermediate genes expression, probably by inhibiting host BANF1. Modulates cellular responses via host JUN by two different mechanisms, either by direct phosphorylation or by modulation of upstream JIP1-MAPK complexes. Seems to participate in the accumulation/processing of late proteins and thus in virion maturation. In addition, inhibits B12 repressive activity on viral DNA replication via a phosphorylation-dependent mechanism. In Bos taurus (Bovine), this protein is B1 kinase (OPG187).